Reading from the N-terminus, the 225-residue chain is NAD(P)H-quinone oxidoreductase subunit K, chloroplastic (225 aa).

4 residues coordinate [4Fe-4S] cluster: C43, C44, C108, and C139.

The protein belongs to the complex I 20 kDa subunit family. As to quaternary structure, NDH is composed of at least 16 different subunits, 5 of which are encoded in the nucleus. It depends on [4Fe-4S] cluster as a cofactor.

Its subcellular location is the plastid. The protein resides in the chloroplast thylakoid membrane. The enzyme catalyses a plastoquinone + NADH + (n+1) H(+)(in) = a plastoquinol + NAD(+) + n H(+)(out). It catalyses the reaction a plastoquinone + NADPH + (n+1) H(+)(in) = a plastoquinol + NADP(+) + n H(+)(out). Its function is as follows. NDH shuttles electrons from NAD(P)H:plastoquinone, via FMN and iron-sulfur (Fe-S) centers, to quinones in the photosynthetic chain and possibly in a chloroplast respiratory chain. The immediate electron acceptor for the enzyme in this species is believed to be plastoquinone. Couples the redox reaction to proton translocation, and thus conserves the redox energy in a proton gradient. The sequence is that of NAD(P)H-quinone oxidoreductase subunit K, chloroplastic from Platanus occidentalis (Sycamore).